A 583-amino-acid polypeptide reads, in one-letter code: Leucine-rich repeat-containing protein 47 (583 aa).

Alanine 2 carries the post-translational modification N-acetylalanine. LRR repeat units follow at residues 76 to 95, 100 to 121, 130 to 152, 154 to 175, 180 to 202, 203 to 225, and 226 to 246; these read QLHS…SPEL, ALRV…QGLG, QLQS…ARCA, RLQS…LFRP, LLSE…AHLA, SLKT…ADCP, and KLKE…EKMV. Positions 260–300 are disordered; it reads VGGRGGGKGKGRAEGSEKEESRRKRRERKQRREGGDGEEQD. A compositionally biased stretch (basic and acidic residues) spans 270–281; the sequence is GRAEGSEKEESR. Phosphoserine occurs at positions 315 and 431. Positions 402–437 form a coiled coil; sequence LGRKEAKAKELVRQLQLEAEEQRKQKKRQSVSGLHR. The residue at position 509 (tyrosine 509) is a Phosphotyrosine. Positions 513-544 are disordered; the sequence is NKEEGSLSDTEADAVSGQLPDPTTNPSAGKDG. Phosphoserine is present on residues serine 518 and serine 520.

The sequence is that of Leucine-rich repeat-containing protein 47 (LRRC47) from Homo sapiens (Human).